We begin with the raw amino-acid sequence, 539 residues long: Carboxysome assembly protein CcmM (539 aa).

Residues 1 to 214 form a carbonic anhydrase-like domain region; sequence MPSPTTVPVA…PLRPSSSEAT (214 aa). Positions 194-213 are disordered; that stretch reads TADFHSTPTPSPLRPSSSEA. The RbcS-like repeat 1, SSUL1 repeat unit spans residues 226 to 397; the sequence is SSEVITQVRS…VLAELENCLS (172 aa). 2 disulfides stabilise this stretch: cysteine 261-cysteine 279 and cysteine 377-cysteine 395. One copy of the RbcS-like repeat 2, SSUL2 repeat lies at 341 to 425; the sequence is LSAEVVNKVR…RVFEALIQDP (85 aa). The segment at 427 to 459 is disordered; that stretch reads GPVGSAKAAAAPVSSATPSSHSYTSNGSSSSDV. Residues 431-457 show a composition bias toward low complexity; the sequence is SAKAAAAPVSSATPSSHSYTSNGSSSS. One copy of the RbcS-like repeat 3, SSUL3 repeat lies at 453 to 539; sequence GSSSSDVAGQ…RVAELLIQKP (87 aa).

It belongs to the gamma-class carbonic anhydrase family. Probably a homotrimer. Purifies from carboxysomes in complex with both RuBisCO subunits and carbonic anhydrase (ccaA); the complex is probably associated with the carboxysome shell. Interacts with CcmN. Binds holo-RuBisCO (RbcL(8)-RbcS(8)) via its SSUL domains; the SSUL domain binds close to the equitorial domain of RuBisCO between RbcL dimers, with 1 M35 protein per dimer. As to quaternary structure, the short form purifies from carboxysomes in complex with both RuBisCO subunits; the complex is probably associated with the carboxysome shell. Post-translationally, identified as 2 proteins of 58 and 38 kDa by mass spectrometry, called M58 and M35, the shorter protein is translated starting at Val-216. Protease inhibitors do not alter the appearance of M35. In isolated carboxysomes M35 is 4-5 fold more abundant. The first amino acid (equivalent to Val-216) is not seen in Edman degradation, while Tyr-219 and Gln-222 may be post-translationally modified.

It is found in the carboxysome. Functions as a scaffold protein for the assembly of beta-carboxysomes, initiates carboxysome assembly by coalescing RuBisCO (ribulose bisphosphate carboxylase, rbcL-rbcS). Produced as a full-length (M58) and a shorter form (M35); both forms are required for correct carboxysome assembly and growth. The short form is more abundant. Despite its strong similarity to gamma-class carbonic anhydrase (CA) it does not have detectable CA activity. In terms of biological role, the M35 isoform is able to condense RuBisCO into a liquid matrix; the presence of disulfide bonds in M35 reduces affinity for RuBisCO, while mutating all 4 Cys to Ser causes a 4-fold increase in doubling time, more than 15% increase in CO(2) requirement, and abnormal carboxysomes. Functionally, beta-carboxysome assembly initiates when soluble RuBisCO is condensed into a liquid matrix in a pre-carboxysome by the RbcS-like domains of probably both CcmM58 and CcmM35. CcmN interacts with the N-terminus of CcmM58, and then recruits the CcmK2 major shell protein plus other less abundant CcmK proteins via CcmN's encapsulation peptide. Shell formation requires CcmK proteins and CcmO. CcmL caps the otherwise elongated carboxysome. Once fully encapsulated carboxysomes are formed, they migrate within the cell probably via interactions with the cytoskeleton. The protein is Carboxysome assembly protein CcmM of Synechococcus elongatus (strain ATCC 33912 / PCC 7942 / FACHB-805) (Anacystis nidulans R2).